A 195-amino-acid chain; its full sequence is Probable septum site-determining protein MinC (195 aa).

Belongs to the MinC family. As to quaternary structure, interacts with MinD and FtsZ.

Functionally, cell division inhibitor that blocks the formation of polar Z ring septums. Rapidly oscillates between the poles of the cell to destabilize FtsZ filaments that have formed before they mature into polar Z rings. Prevents FtsZ polymerization. The protein is Probable septum site-determining protein MinC of Helicobacter pylori (strain G27).